The chain runs to 27 residues: Caerulein precursor fragment R5 (27 aa).

In terms of tissue distribution, expressed by the skin glands.

It localises to the secreted. Antimicrobial peptide. In Xenopus ruwenzoriensis (Uganda clawed frog), this protein is Caerulein precursor fragment R5.